A 407-amino-acid chain; its full sequence is Tyrosine--tRNA ligase (407 aa).

Y35 is an L-tyrosine binding site. The 'HIGH' region signature appears at P40 to H49. Residues Y168 and Q172 each contribute to the L-tyrosine site. The 'KMSKS' region motif lies at K228–T232. K231 serves as a coordination point for ATP. An S4 RNA-binding domain is found at N341–V405.

This sequence belongs to the class-I aminoacyl-tRNA synthetase family. TyrS type 1 subfamily. As to quaternary structure, homodimer.

It localises to the cytoplasm. It catalyses the reaction tRNA(Tyr) + L-tyrosine + ATP = L-tyrosyl-tRNA(Tyr) + AMP + diphosphate + H(+). Catalyzes the attachment of tyrosine to tRNA(Tyr) in a two-step reaction: tyrosine is first activated by ATP to form Tyr-AMP and then transferred to the acceptor end of tRNA(Tyr). The protein is Tyrosine--tRNA ligase of Clostridium botulinum (strain Kyoto / Type A2).